The sequence spans 390 residues: Bibenzyl synthase (390 aa).

Residue Cys164 is part of the active site.

Belongs to the thiolase-like superfamily. Chalcone/stilbene synthases family.

It carries out the reaction 3-(3-hydroxyphenyl)-propanoyl-CoA + 3 malonyl-CoA + 3 H(+) = 3,3',5-trihydroxybibenzyl + 4 CO2 + 4 CoA. This Phalaenopsis sp. (Moth orchid) protein is Bibenzyl synthase (BIBSY212).